The following is a 247-amino-acid chain: MPRYRLLIEYNGGPYQGWMRLPGLQTVQGALEAAAAQLDGGPVEVTGAGRTDAGVHATGQVAHMDLRVDRPNKVADAMNYHLRPHPIAVLKADRVEEDFHARFSAIARHYRYIVINRRAHLTHDQGLAWRVPSRLDADKMHEAAQSFVGTHDFTTFRDSECQALSPVKTLTRLDVARYNDRIEFTCSAPSFIHRQVRSLVGSLVEVGRGRHPVKWAREILEAADRTRCGPVAPSDGLFLERVDYPAG.

The active-site Nucleophile is Asp52. Tyr110 lines the substrate pocket.

Belongs to the tRNA pseudouridine synthase TruA family. As to quaternary structure, homodimer.

The enzyme catalyses uridine(38/39/40) in tRNA = pseudouridine(38/39/40) in tRNA. Its function is as follows. Formation of pseudouridine at positions 38, 39 and 40 in the anticodon stem and loop of transfer RNAs. The sequence is that of tRNA pseudouridine synthase A from Hyphomonas neptunium (strain ATCC 15444).